The chain runs to 592 residues: Calnexin (592 aa).

The first 20 residues, 1–20 (MEGKWLLCMLLVLGTAIVEA), serve as a signal peptide directing secretion. Residues 21–481 (HDGHDDDVID…QMIEAAEERP (461 aa)) lie on the Lumenal side of the membrane. Positions 74 and 117 each coordinate Ca(2+). Lys137 bears the N6-acetyllysine mark. Cys160 and Cys194 are oxidised to a cystine. Tyr164, Lys166, Tyr185, and Asp192 together coordinate an alpha-D-glucoside. Residues 260–345 (GNLLNDMTPP…AEKPEDWDED (86 aa)) are disordered. The segment covering 274–319 (REIEDPEDRKPEDWDERPKIPDPEAVKPDDWDEDAPAKIPDEEATK) has biased composition (basic and acidic residues). The p domain (Extended arm) stretch occupies residues 276–409 (IEDPEDRKPE…RKIPNPDFFE (134 aa)). Tandem repeats lie at residues 278-290 (DPED…WDER), 295-307 (DPEA…WDED), 314-326 (DEEA…WLDD), 333-345 (DPDA…WDED), and 348-358 (GEWEAPQIANP). 4 X approximate repeats stretches follow at residues 278–345 (DPED…WDED) and 348–405 (GEWE…IPNP). Over residues 323–345 (WLDDEPEYVPDPDAEKPEDWDED) the composition is skewed to acidic residues. The interaction with PPIB stretch occupies residues 326-359 (DEPEYVPDPDAEKPEDWDEDMDGEWEAPQIANPR). A disulfide bridge connects residues Cys360 and Cys366. A run of 3 repeats spans residues 367-377 (GVWQRPVIDNP), 381-391 (GKWKPPMIDNP), and 395-405 (GIWKPRKIPNP). Glu425 contacts an alpha-D-glucoside. Asp436 is a Ca(2+) binding site. A helical membrane pass occupies residues 482–502 (WLWVVYILTVALPVFLVILFC). S-palmitoyl cysteine attachment occurs at residues Cys502 and Cys503. The Cytoplasmic portion of the chain corresponds to 503–592 (CSGKKQTSGM…SPRNRKPRRE (90 aa)). Positions 503–592 (CSGKKQTSGM…SPRNRKPRRE (90 aa)) are sufficient to mediate interaction with SGIP1. The tract at residues 511-592 (GMEYKKTDAP…SPRNRKPRRE (82 aa)) is disordered. Residues 525–547 (KEEEEEKEEEKDKGDEEEEGEEK) are compositionally biased toward acidic residues. Residue Ser554 is modified to Phosphoserine. Residue Thr562 is modified to Phosphothreonine. A Phosphoserine; by MAPK3 modification is found at Ser564. A Phosphoserine modification is found at Ser583.

Belongs to the calreticulin family. Interacts with MAPK3/ERK1. Interacts with KCNH2. Associates with ribosomes. Interacts with SGIP1; involved in negative regulation of endocytosis. The palmitoylated form interacts with the ribosome-translocon complex component SSR1, promoting efficient folding of glycoproteins. Interacts with SERPINA2P/SERPINA2 and with the S and Z variants of SERPINA1. Interacts with PPIB. Interacts with ZNRF4. Interacts with SMIM22. Interacts with TMX2. Interacts with TMEM35A/NACHO. Interacts with CHRNA7. Interacts with reticulophagy regulators RETREG2 and RETREG3. Interacts with DNM1L; may form part of a larger protein complex at the ER-mitochondrial interface during mitochondrial fission. Interacts with ADAM7. As to quaternary structure, (Microbial infection) Interacts with HBV large envelope protein, isoform L. In terms of assembly, (Microbial infection) Interacts with HBV large envelope protein, isoform M; this association may be essential for isoform M proper secretion. In terms of processing, phosphorylated at Ser-564 by MAPK3/ERK1. Phosphorylation by MAPK3/ERK1 increases its association with ribosomes. Post-translationally, palmitoylation by DHHC6 leads to the preferential localization to the perinuclear rough ER. It mediates the association of calnexin with the ribosome-translocon complex (RTC) which is required for efficient folding of glycosylated proteins. Ubiquitinated, leading to proteasomal degradation. Probably ubiquitinated by ZNRF4.

The protein resides in the endoplasmic reticulum membrane. It localises to the mitochondrion membrane. The protein localises to the melanosome membrane. Functionally, calcium-binding protein that interacts with newly synthesized monoglucosylated glycoproteins in the endoplasmic reticulum. It may act in assisting protein assembly and/or in the retention within the ER of unassembled protein subunits. It seems to play a major role in the quality control apparatus of the ER by the retention of incorrectly folded proteins. Associated with partial T-cell antigen receptor complexes that escape the ER of immature thymocytes, it may function as a signaling complex regulating thymocyte maturation. Additionally it may play a role in receptor-mediated endocytosis at the synapse. This is Calnexin (CANX) from Homo sapiens (Human).